An 852-amino-acid polypeptide reads, in one-letter code: Kinesin-like protein KIF18B (852 aa).

One can recognise a Kinesin motor domain in the interval 7–351 (TLQVVVRVRP…LKYADRAKEI (345 aa)). 109–116 (GATGAGKT) is an ATP binding site. Positions 366 to 393 (ISQYATICQQLQAEVAALRKKLQVYEGG) form a coiled coil. 2 disordered regions span residues 390–424 (YEGG…PAGP) and 437–485 (QVER…RLTL). Ser-404 carries the phosphoserine modification. Thr-417 carries the post-translational modification Phosphothreonine. Residues 451–461 (QSPEDEDEGPA) show a composition bias toward acidic residues. A phosphoserine mark is found at Ser-452, Ser-480, and Ser-558. Disordered stretches follow at residues 575 to 594 (IPVP…PVTR) and 602 to 689 (GPLH…SPRV). Residues 577–588 (VPSPLCPEPPGY) are compositionally biased toward pro residues. The short motif at 624–632 (PMEKKRRRP) is the Nuclear localization signal element. Residues Ser-633 and Ser-639 each carry the phosphoserine modification. The MAPRE1-binding signature appears at 653–656 (SFLP). Position 662 is a phosphoserine (Ser-662). Polar residues predominate over residues 664 to 673 (PDTQPSQGPS). Thr-674 carries the post-translational modification Phosphothreonine. A KIF2C-binding region spans residues 711 to 736 (TPLALPTRDLNATFDLSEEPPSKPSF). Residues 767 to 798 (MKGPKPTSSLPGTSACKKKRVASSSVSHGRSR) are disordered. Short sequence motifs (MAPRE1-binding) lie at residues 774–777 (SSLP) and 800–803 (ARLP). Ser-822 is subject to Phosphoserine.

The protein belongs to the TRAFAC class myosin-kinesin ATPase superfamily. Kinesin family. In terms of assembly, interacts with MAPRE1; this interaction is required for efficient accumulation at microtubule plus ends. Interacts with KIF2C at microtubule tips; this interaction increases the affinity of both partners for microtubule plus ends and is required for robust microtubule depolymerization. KIF2C phosphorylation by AURKA or AURKB strongly reduces KIF18B-binding. As to expression, shows a prominent expression in the amygdala.

The protein localises to the nucleus. It is found in the cytoplasm. The protein resides in the cytoskeleton. In terms of biological role, in complex with KIF2C, constitutes the major microtubule plus-end depolymerizing activity in mitotic cells. Its major role may be to transport KIF2C and/or MAPRE1 along microtubules. The polypeptide is Kinesin-like protein KIF18B (KIF18B) (Homo sapiens (Human)).